The chain runs to 282 residues: HTH-type transcriptional activator RhaR (282 aa).

In terms of domain architecture, HTH araC/xylS-type spans 179–277 (DKLITALANS…GMTPSQWRHL (99 aa)). 2 DNA-binding regions (H-T-H motif) span residues 196–217 (DAFC…RAQT) and 244–267 (ISEI…TRET).

Binds DNA as a dimer.

It localises to the cytoplasm. Functionally, activates expression of the rhaSR operon in response to L-rhamnose. This is HTH-type transcriptional activator RhaR from Salmonella schwarzengrund (strain CVM19633).